We begin with the raw amino-acid sequence, 557 residues long: Formate--tetrahydrofolate ligase 2 (557 aa).

Residue 66-73 (TPAGEGKT) coordinates ATP.

Belongs to the formate--tetrahydrofolate ligase family.

The enzyme catalyses (6S)-5,6,7,8-tetrahydrofolate + formate + ATP = (6R)-10-formyltetrahydrofolate + ADP + phosphate. The protein operates within one-carbon metabolism; tetrahydrofolate interconversion. The sequence is that of Formate--tetrahydrofolate ligase 2 from Streptococcus pyogenes serotype M12 (strain MGAS9429).